An 88-amino-acid polypeptide reads, in one-letter code: ATP synthase F(0) complex subunit f, mitochondrial (88 aa).

Alanine 2 is modified (N-acetylalanine). Serine 3 carries the phosphoserine modification. Lysine 16 is modified (N6-acetyllysine). Residues 62-79 (MVLAAYVVFNYCRSYKEL) form a helical membrane-spanning segment.

This sequence belongs to the ATPase F chain family. Component of the ATP synthase complex composed at least of ATP5F1A/subunit alpha, ATP5F1B/subunit beta, ATP5MC1/subunit c (homooctomer), MT-ATP6/subunit a, MT-ATP8/subunit 8, ATP5ME/subunit e, ATP5MF/subunit f, ATP5MG/subunit g, ATP5MK/subunit k, ATP5MJ/subunit j, ATP5F1C/subunit gamma, ATP5F1D/subunit delta, ATP5F1E/subunit epsilon, ATP5PF/subunit F6, ATP5PB/subunit b, ATP5PD/subunit d, ATP5PO/subunit OSCP. ATP synthase complex consists of a soluble F(1) head domain (subunits alpha(3) and beta(3)) - the catalytic core - and a membrane F(0) domain - the membrane proton channel (subunits c, a, 8, e, f, g, k and j). These two domains are linked by a central stalk (subunits gamma, delta, and epsilon) rotating inside the F1 region and a stationary peripheral stalk (subunits F6, b, d, and OSCP).

Its subcellular location is the mitochondrion. The protein localises to the mitochondrion inner membrane. Functionally, subunit f, of the mitochondrial membrane ATP synthase complex (F(1)F(0) ATP synthase or Complex V) that produces ATP from ADP in the presence of a proton gradient across the membrane which is generated by electron transport complexes of the respiratory chain. ATP synthase complex consist of a soluble F(1) head domain - the catalytic core - and a membrane F(1) domain - the membrane proton channel. These two domains are linked by a central stalk rotating inside the F(1) region and a stationary peripheral stalk. During catalysis, ATP synthesis in the catalytic domain of F(1) is coupled via a rotary mechanism of the central stalk subunits to proton translocation. In vivo, can only synthesize ATP although its ATP hydrolase activity can be activated artificially in vitro. Part of the complex F(0) domain. The chain is ATP synthase F(0) complex subunit f, mitochondrial from Sus scrofa (Pig).